The following is a 585-amino-acid chain: A-type ATP synthase subunit A (585 aa).

Residues 192–211 (MRQEWPVREPRPTVEKKTPR) are disordered. The span at 196–211 (WPVREPRPTVEKKTPR) shows a compositional bias: basic and acidic residues. 237–244 (GPFGSGKT) contributes to the ATP binding site.

It belongs to the ATPase alpha/beta chains family. Has multiple subunits with at least A(3), B(3), C, D, E, F, H, I and proteolipid K(x).

It localises to the cell membrane. It catalyses the reaction ATP + H2O + 4 H(+)(in) = ADP + phosphate + 5 H(+)(out). Functionally, component of the A-type ATP synthase that produces ATP from ADP in the presence of a proton gradient across the membrane. The A chain is the catalytic subunit. The chain is A-type ATP synthase subunit A from Haloquadratum walsbyi (strain DSM 16790 / HBSQ001).